The following is a 336-amino-acid chain: Abasic site processing protein HMCES (336 aa).

The Nucleophile role is filled by C2. Residue C2 is modified to Thiazolidine linkage to a ring-opened DNA abasic site. A compositionally biased stretch (basic and acidic residues) spans 29 to 38 (QPEWLREGRY). Positions 29–52 (QPEWLREGRYRPSYNKGPQSSGPV) are disordered. E127 is a catalytic residue. A disordered region spans residues 283–336 (LKSSQEGSPQKKEDTLPRWKSQFIHSPSPKKSSAGILRQWLGQEGGPPAKKQKA).

It belongs to the SOS response-associated peptidase family.

The protein localises to the chromosome. Formation and reversal of DNA-protein cross-link depends on DNA context. Catalyzes formation of the thiazolidine linkage in presence of abasic sites in single-stranded DNA. Mediates the reversal of the thiazolidine cross-link in presence of double stranded DNA. In terms of biological role, sensor of abasic sites in single-stranded DNA (ssDNA) required to preserve genome integrity by promoting error-free repair of abasic sites. Acts as an enzyme that recognizes and binds abasic sites in ssDNA at replication forks and chemically modifies the lesion by forming a covalent cross-link with DNA: forms a stable thiazolidine linkage between a ring-opened abasic site and the alpha-amino and sulfhydryl substituents of its N-terminal catalytic cysteine residue. The HMCES DNA-protein cross-link is then either reversed or degraded. HMCES is able to catalyze the reversal of its thiazolidine cross-link and cycle between a cross-link and a non-cross-linked state depending on DNA context: mediates self-reversal of the thiazolidine cross-link in double stranded DNA, allowing APEX1 to initiate downstream repair of abasic sites. The HMCES DNA-protein cross-link can also be degraded by the SPRTN metalloprotease following unfolding by the BRIP1/FANCJ helicase. Promotes error-free repair of abasic sites by protecting abasic sites from translesion synthesis (TLS) polymerases and endonucleases that are error-prone and would generate mutations and double-strand breaks. Acts as a protease: mediates autocatalytic processing of its N-terminal methionine in order to expose the catalytic cysteine. The HMCES DNA-protein cross-link is then either reversed or degraded. According to a model, the HMCES DNA-protein cross-link. The sequence is that of Abasic site processing protein HMCES from Gallus gallus (Chicken).